The primary structure comprises 435 residues: MSFCKLVSFVLILHLLNSCLISCSSNDLSQIPKNFLSLAKREDFFDWMVGIRRRIHENPELGYEEVETSKLVKTELDKMGVSYKNPVAVTGVIGYVGTGHAPFVALRADMDALPIQEMVEWEHKSKIPGKMHACGHDAHTTMLLGAAKLLKEHQEELQGTVILVFQPAEEGGAGAKKIVEAGVLENVGAIFGLHVSNLLGLGQLSSREGLLMAGSGRFKATISGKGGHAALPQFAIDPVLAASNVILSLQHLVSREADPLDSQVVTVATFEGSDAFNVIPDSVTIGGTFRALLPKSFEQLKQRIVQVITTQASVNMCNATVDFLEDETPPFPPTVNNKTLHLFYKNVSVDMLGIENYVETLPVMVSEDFAFYQQAIPGHFSFVGMQNKSHSPMANPHSPFFEVNEELLPYGASLLASLATRYLLDSSSSPNKDEL.

Residues Met1 to Ser25 form the signal peptide. 5 residues coordinate Mn(2+): Cys134, His136, Glu170, His194, and His397. The Prevents secretion from ER signature appears at Lys432 to Leu435.

It belongs to the peptidase M20 family.

It localises to the endoplasmic reticulum lumen. Its function is as follows. Hydrolyzes certain amino acid conjugates of the plant growth regulator indole-3-acetic acid (IAA). In Arabidopsis thaliana (Mouse-ear cress), this protein is IAA-amino acid hydrolase ILR1-like 5.